A 502-amino-acid chain; its full sequence is Probable malate:quinone oxidoreductase (502 aa).

This sequence belongs to the MQO family. The cofactor is FAD.

The catalysed reaction is (S)-malate + a quinone = a quinol + oxaloacetate. It functions in the pathway carbohydrate metabolism; tricarboxylic acid cycle; oxaloacetate from (S)-malate (quinone route): step 1/1. The polypeptide is Probable malate:quinone oxidoreductase (Oceanobacillus iheyensis (strain DSM 14371 / CIP 107618 / JCM 11309 / KCTC 3954 / HTE831)).